We begin with the raw amino-acid sequence, 436 residues long: Probable transporter MCH1 (436 aa).

The next 7 membrane-spanning stretches (helical) occupy residues 27–47 (VVAF…LLFT), 66–86 (MISS…GYLA), 93–113 (LLSL…SYLV), 119–139 (SVIG…SLYF), 155–175 (LAIS…AQIL), 188–208 (LEVV…ASFV), and 249–269 (FVSF…ILNI). An N-linked (GlcNAc...) asparagine glycan is attached at N278. The next 5 membrane-spanning stretches (helical) occupy residues 295–312 (VSIM…LGVL), 325–345 (LLVV…SAIL), 347–367 (GVSY…IWGI), 373–393 (TWGS…MFYG), and 410–430 (TAGA…IWYA).

The protein belongs to the major facilitator superfamily.

It localises to the vacuole membrane. Its function is as follows. Probable transporter. This chain is Probable transporter MCH1 (MCH1), found in Candida albicans (strain SC5314 / ATCC MYA-2876) (Yeast).